A 391-amino-acid chain; its full sequence is Chaperone protein DnaJ (391 aa).

In terms of domain architecture, J spans 4 to 68 (DFYDVLGVSR…ETRQQYDQLG (65 aa)). Over residues 53-79 (DVLTDEETRQQYDQLGHERFEEAEKRG) the composition is skewed to basic and acidic residues. 2 disordered regions span residues 53 to 94 (DVLT…MGGA) and 117 to 136 (FFGG…EQGR). Composition is skewed to gly residues over residues 81 to 94 (TGNG…MGGA) and 119 to 129 (GGAGGGGGRGR). A CR-type zinc finger spans residues 152–234 (GVSKQVTVRR…CGGQGQTRER (83 aa)). Positions 165, 168, 182, 185, 208, 211, 222, and 225 each coordinate Zn(2+). CXXCXGXG motif repeat units lie at residues 165–172 (CADCGGSG), 182–189 (CPQCDGQG), 208–215 (CSRCGGEG), and 222–229 (CSTCGGQG).

The protein belongs to the DnaJ family. Homodimer. Zn(2+) serves as cofactor.

Its subcellular location is the cytoplasm. Participates actively in the response to hyperosmotic and heat shock by preventing the aggregation of stress-denatured proteins and by disaggregating proteins, also in an autonomous, DnaK-independent fashion. Unfolded proteins bind initially to DnaJ; upon interaction with the DnaJ-bound protein, DnaK hydrolyzes its bound ATP, resulting in the formation of a stable complex. GrpE releases ADP from DnaK; ATP binding to DnaK triggers the release of the substrate protein, thus completing the reaction cycle. Several rounds of ATP-dependent interactions between DnaJ, DnaK and GrpE are required for fully efficient folding. Also involved, together with DnaK and GrpE, in the DNA replication of plasmids through activation of initiation proteins. The chain is Chaperone protein DnaJ from Halobacterium salinarum (strain ATCC 29341 / DSM 671 / R1).